We begin with the raw amino-acid sequence, 392 residues long: Cytochrome b (392 aa).

4 helical membrane passes run 38-58 (FGSL…FLAM), 82-104 (WLLR…LHIF), 119-139 (VRCL…TGYV), and 185-205 (FFSL…LHLA). Positions 88 and 102 each coordinate heme b. His-189 and His-203 together coordinate heme b. An a ubiquinone-binding site is contributed by His-208. Helical transmembrane passes span 231 to 251 (FYVK…IWIF), 295 to 315 (SGGV…PFFK), 327 to 347 (IHQG…WIGC), and 354 to 373 (FVTI…AITP).

It belongs to the cytochrome b family. In terms of assembly, the main subunits of complex b-c1 are: cytochrome b, cytochrome c1 and the Rieske protein. Heme b serves as cofactor.

Its subcellular location is the mitochondrion inner membrane. Component of the ubiquinol-cytochrome c reductase complex (complex III or cytochrome b-c1 complex) that is part of the mitochondrial respiratory chain. The b-c1 complex mediates electron transfer from ubiquinol to cytochrome c. Contributes to the generation of a proton gradient across the mitochondrial membrane that is then used for ATP synthesis. The sequence is that of Cytochrome b (MT-CYB) from Vicia faba (Broad bean).